Consider the following 666-residue polypeptide: Neopullulanase 1 (666 aa).

The signal sequence occupies residues 1–29; the sequence is MIKLLKPMSLSILLVFILSFSFPFPTAKA. The Ca(2+) site is built by alanine 31, aspartate 33, asparagine 35, aspartate 71, aspartate 125, asparagine 174, aspartate 176, asparagine 179, aspartate 180, glycine 216, and aspartate 218. Substrate is bound at residue histidine 296. Ca(2+) is bound by residues aspartate 305, asparagine 309, phenylalanine 310, serine 312, and glutamate 317. Arginine 383 provides a ligand contact to substrate. Residue aspartate 385 is the Nucleophile of the active site. Residue glutamate 425 is the Proton donor of the active site. Residues 500 to 501, aspartate 545, and arginine 549 contribute to the substrate site; that span reads HD.

It belongs to the glycosyl hydrolase 13 family. Requires Ca(2+) as cofactor.

It is found in the secreted. It carries out the reaction Hydrolysis of pullulan to panose (6-alpha-D-glucosylmaltose).. In terms of biological role, endohydrolysis of 1,4-alpha-glucosidic linkages in pullulan to form panose. Also hydrolyzes cyclodextrins. This is Neopullulanase 1 (tvaI) from Thermoactinomyces vulgaris.